The chain runs to 360 residues: Phospho-N-acetylmuramoyl-pentapeptide-transferase (360 aa).

A run of 10 helical transmembrane segments spans residues 25 to 45, 73 to 93, 97 to 117, 135 to 155, 170 to 190, 199 to 219, 236 to 256, 263 to 283, 288 to 308, and 338 to 358; these read RGIL…PWMI, TMGG…WADL, YVWV…VDDY, FWQS…APSA, IPLG…SSNA, GLAI…CYLS, AGEL…FLWF, VFMG…MAVI, IVLF…VIQV, and VIVR…ATLK.

Belongs to the glycosyltransferase 4 family. MraY subfamily. Mg(2+) serves as cofactor.

The protein localises to the cell inner membrane. It carries out the reaction UDP-N-acetyl-alpha-D-muramoyl-L-alanyl-gamma-D-glutamyl-meso-2,6-diaminopimeloyl-D-alanyl-D-alanine + di-trans,octa-cis-undecaprenyl phosphate = di-trans,octa-cis-undecaprenyl diphospho-N-acetyl-alpha-D-muramoyl-L-alanyl-D-glutamyl-meso-2,6-diaminopimeloyl-D-alanyl-D-alanine + UMP. It functions in the pathway cell wall biogenesis; peptidoglycan biosynthesis. Catalyzes the initial step of the lipid cycle reactions in the biosynthesis of the cell wall peptidoglycan: transfers peptidoglycan precursor phospho-MurNAc-pentapeptide from UDP-MurNAc-pentapeptide onto the lipid carrier undecaprenyl phosphate, yielding undecaprenyl-pyrophosphoryl-MurNAc-pentapeptide, known as lipid I. This is Phospho-N-acetylmuramoyl-pentapeptide-transferase from Pseudomonas savastanoi pv. phaseolicola (strain 1448A / Race 6) (Pseudomonas syringae pv. phaseolicola (strain 1448A / Race 6)).